We begin with the raw amino-acid sequence, 516 residues long: Protein P54 (516 aa).

A signal peptide spans 1–27 (MKKSLLSAVMLSSIALTAVGSPIAAAA). The segment at 208-397 (ATAEDKKADL…PAPAPAPNPS (190 aa)) is disordered. The span at 210-236 (AEDKKADLNRKKAEAEAEQARIREQAR) shows a compositional bias: basic and acidic residues. 2 stretches are compositionally biased toward low complexity: residues 237 to 247 (LAEQARQQAAQ) and 257 to 380 (QAAA…TVTP). Positions 381–395 (APTPTPTPAPAPAPN) are enriched in pro residues. In terms of domain architecture, NlpC/P60 spans 399–516 (SVNGAAIVAE…WYTPDFAVSM (118 aa)). C429 serves as the catalytic Nucleophile. H480 (proton acceptor) is an active-site residue. The active site involves H492.

Belongs to the peptidase C40 family.

It is found in the secreted. The protein resides in the cell wall. This is Protein P54 from Enterococcus faecium (Streptococcus faecium).